We begin with the raw amino-acid sequence, 628 residues long: E3 SUMO-protein ligase PIAS3 (628 aa).

Residues 1–200 (MAELGELKHM…QLRFCLCETS (200 aa)) form an interaction with CCAR2 region. The SAP domain maps to 11-45 (VMSFRVSELQVLLGFAGRNKSGRKHELLAKALHLL). Residues 19–23 (LQVLL) carry the LXXLL motif motif. Glycyl lysine isopeptide (Lys-Gly) (interchain with G-Cter in SUMO2) cross-links involve residues Lys-46 and Lys-56. The tract at residues 72 to 95 (PSDLSLLSLPPGTSPVGSPSPLAS) is disordered. In terms of domain architecture, PINIT spans 115-280 (MHPPLPQPVH…SLSVYLVRQL (166 aa)). Glycyl lysine isopeptide (Lys-Gly) (interchain with G-Cter in SUMO2) cross-links involve residues Lys-230 and Lys-307. An SP-RING-type zinc finger spans residues 312–393 (PDSEVATTSL…FMEILNSCSD (82 aa)). Zn(2+) is bound by residues Cys-343, His-345, Cys-366, and Cys-369. The tract at residues 450–460 (LTIESSSDEED) is SUMO1-binding. Residues Lys-466 and Lys-482 each participate in a glycyl lysine isopeptide (Lys-Gly) (interchain with G-Cter in SUMO2) cross-link. The tract at residues 573-618 (LAPTLGSSHRSATPAPAPGRVSSIVAPGSSLREGHGGPLPSGPSLT) is disordered.

This sequence belongs to the PIAS family. Binds SUMO1 and UBE2I. Interacts with AR, BCL11A, GFI1, HMGA2, IRF1, MITF, NCOA2, as well as with STAT3, after treatment with IL6, CNTF or OSM and with STAT5, after PRL stimulation. Interacts with PLAG1. Interacts with ZFHX3. Interacts with MTA1. Interacts with CCAR2 (via N-terminus). Interacts with TRIM8. Interacts with PRDM1. Sumoylated. As to expression, widely expressed, with highest levels in lung, kidney and spleen.

It is found in the cytoplasm. Its subcellular location is the nucleus. It localises to the nucleus speckle. It participates in protein modification; protein sumoylation. In terms of biological role, functions as an E3-type small ubiquitin-like modifier (SUMO) ligase, stabilizing the interaction between UBE2I and the substrate, and as a SUMO-tethering factor. Plays a crucial role as a transcriptional coregulation in various cellular pathways, including the STAT pathway and the steroid hormone signaling pathway. The effects of this transcriptional coregulation, transactivation or silencing, may vary depending upon the biological context. Enhances the sumoylation of MTA1 and may participate in its paralog-selective sumoylation. Sumoylates CCAR2 which promotes its interaction with SIRT1. Diminishes the sumoylation of ZFHX3 by preventing the colocalization of ZFHX3 with SUMO1 in the nucleus. The chain is E3 SUMO-protein ligase PIAS3 (Pias3) from Rattus norvegicus (Rat).